A 369-amino-acid polypeptide reads, in one-letter code: Glutamate 5-kinase (369 aa).

Position 14 (K14) interacts with ATP. The substrate site is built by S56, D143, and N155. Residues 175–176 and 215–221 contribute to the ATP site; these read SD and TGGMASK. A PUA domain is found at 277–351; the sequence is AGKIRLDDGA…GMQTQDLPDG (75 aa).

This sequence belongs to the glutamate 5-kinase family.

The protein resides in the cytoplasm. It catalyses the reaction L-glutamate + ATP = L-glutamyl 5-phosphate + ADP. The protein operates within amino-acid biosynthesis; L-proline biosynthesis; L-glutamate 5-semialdehyde from L-glutamate: step 1/2. Catalyzes the transfer of a phosphate group to glutamate to form L-glutamate 5-phosphate. The protein is Glutamate 5-kinase of Corynebacterium glutamicum (strain ATCC 13032 / DSM 20300 / JCM 1318 / BCRC 11384 / CCUG 27702 / LMG 3730 / NBRC 12168 / NCIMB 10025 / NRRL B-2784 / 534).